A 1456-amino-acid polypeptide reads, in one-letter code: Putative 1-phosphatidylinositol-3-phosphate 5-kinase FAB1D (1456 aa).

A compositionally biased stretch (low complexity) spans M1–S19. 6 disordered regions span residues M1–G110, P533–E592, E925–V944, V967–I987, N1003–V1022, and N1137–L1159. The segment covering E43–S57 has biased composition (basic and acidic residues). Residues R86–G110 are compositionally biased toward acidic residues. Low complexity predominate over residues P533–S544. The segment covering S973–I987 has biased composition (polar residues). A PIPK domain is found at N1115–F1443. The span at R1150 to L1159 shows a compositional bias: polar residues.

As to quaternary structure, component of the PI(3,5)P2 regulatory complex at least composed of ATG18, SAC/FIG4, FAB1 and VAC14. It depends on Mg(2+) as a cofactor. Mn(2+) is required as a cofactor.

It carries out the reaction a 1,2-diacyl-sn-glycero-3-phospho-(1D-myo-inositol-3-phosphate) + ATP = a 1,2-diacyl-sn-glycero-3-phospho-(1D-myo-inositol-3,5-bisphosphate) + ADP + H(+). The PI(3,5)P2 regulatory complex regulates both the synthesis and turnover of phosphatidylinositol 3,5-bisphosphate (PtdIns(3,5)P2). Catalyzes the phosphorylation of phosphatidylinositol 3-phosphate on the fifth hydroxyl of the myo-inositol ring, to form phosphatidylinositol 3,5-bisphosphate. The protein is Putative 1-phosphatidylinositol-3-phosphate 5-kinase FAB1D (FAB1D) of Arabidopsis thaliana (Mouse-ear cress).